We begin with the raw amino-acid sequence, 208 residues long: MRAVIPYKKAGAKSRLSPVLSLQEREEFVELMLNQVISSLKGAGIEQVDILSPSVYGLEEMTEARVLLDEKDLNEALNRYLKEAEEPVLIVMADLPLLSPEHIKEISSTEKDVCIVPGKGGGTNALFIKNPSKYRVKYYGSSFLTHCSIATDSGQDFEIYDSFMAGTDIDEPEDLVELLIHGKGAAKDYIESKFRLEVKKGRVGLVPL.

It belongs to the CofC family. As to quaternary structure, homodimer.

It carries out the reaction (2S)-2-phospholactate + GTP + H(+) = (2S)-lactyl-2-diphospho-5'-guanosine + diphosphate. The protein operates within cofactor biosynthesis; coenzyme F420 biosynthesis. Functionally, guanylyltransferase that catalyzes the activation of (2S)-2-phospholactate (2-PL) as (2S)-lactyl-2-diphospho-5'-guanosine, via the condensation of 2-PL with GTP. It is involved in the biosynthesis of coenzyme F420, a hydride carrier cofactor. In Methanosarcina mazei (strain ATCC BAA-159 / DSM 3647 / Goe1 / Go1 / JCM 11833 / OCM 88) (Methanosarcina frisia), this protein is 2-phospho-L-lactate guanylyltransferase.